We begin with the raw amino-acid sequence, 501 residues long: Glycerol kinase (501 aa).

Thr-16 serves as a coordination point for ADP. Positions 16, 17, and 18 each coordinate ATP. Residue Thr-16 coordinates sn-glycerol 3-phosphate. Arg-20 contacts ADP. The sn-glycerol 3-phosphate site is built by Arg-84, Glu-85, Tyr-135, and Asp-242. Glycerol-binding residues include Arg-84, Glu-85, Tyr-135, Asp-242, and Gln-243. ADP is bound by residues Thr-264 and Gly-307. 4 residues coordinate ATP: Thr-264, Gly-307, Gln-311, and Gly-408. Residue Gly-408 coordinates ADP.

The protein belongs to the FGGY kinase family.

It catalyses the reaction glycerol + ATP = sn-glycerol 3-phosphate + ADP + H(+). It functions in the pathway polyol metabolism; glycerol degradation via glycerol kinase pathway; sn-glycerol 3-phosphate from glycerol: step 1/1. Key enzyme in the regulation of glycerol uptake and metabolism. Catalyzes the phosphorylation of glycerol to yield sn-glycerol 3-phosphate. This is Glycerol kinase from Saccharolobus islandicus (strain L.S.2.15 / Lassen #1) (Sulfolobus islandicus).